The primary structure comprises 320 residues: Acetyl-coenzyme A carboxylase carboxyl transferase subunit alpha (320 aa).

Residues S41–D295 form the CoA carboxyltransferase C-terminal domain.

Belongs to the AccA family. Acetyl-CoA carboxylase is a heterohexamer composed of biotin carboxyl carrier protein (AccB), biotin carboxylase (AccC) and two subunits each of ACCase subunit alpha (AccA) and ACCase subunit beta (AccD).

The protein resides in the cytoplasm. It catalyses the reaction N(6)-carboxybiotinyl-L-lysyl-[protein] + acetyl-CoA = N(6)-biotinyl-L-lysyl-[protein] + malonyl-CoA. The protein operates within lipid metabolism; malonyl-CoA biosynthesis; malonyl-CoA from acetyl-CoA: step 1/1. Component of the acetyl coenzyme A carboxylase (ACC) complex. First, biotin carboxylase catalyzes the carboxylation of biotin on its carrier protein (BCCP) and then the CO(2) group is transferred by the carboxyltransferase to acetyl-CoA to form malonyl-CoA. The sequence is that of Acetyl-coenzyme A carboxylase carboxyl transferase subunit alpha from Nitrobacter winogradskyi (strain ATCC 25391 / DSM 10237 / CIP 104748 / NCIMB 11846 / Nb-255).